The following is a 320-amino-acid chain: Tyrosine phosphatase H3 (320 aa).

Residues 22-309 (NFWEFVRLEH…AFCYKAVRYA (288 aa)) enclose the Tyrosine-protein phosphatase domain. Catalysis depends on C250, which acts as the Phosphocysteine intermediate.

The protein belongs to the protein-tyrosine phosphatase family.

It catalyses the reaction O-phospho-L-tyrosyl-[protein] + H2O = L-tyrosyl-[protein] + phosphate. In terms of biological role, suppresses host immune cell adhesion and phagocytosis. The sequence is that of Tyrosine phosphatase H3 (H3) from Microplitis demolitor (Parasitoid wasp).